A 201-amino-acid chain; its full sequence is Orotate phosphoribosyltransferase (201 aa).

Residue 113–121 (EDIITTGKS) participates in 5-phospho-alpha-D-ribose 1-diphosphate binding. The orotate site is built by Thr-117 and Arg-145.

Belongs to the purine/pyrimidine phosphoribosyltransferase family. PyrE subfamily. As to quaternary structure, homodimer. Requires Mg(2+) as cofactor.

The enzyme catalyses orotidine 5'-phosphate + diphosphate = orotate + 5-phospho-alpha-D-ribose 1-diphosphate. It participates in pyrimidine metabolism; UMP biosynthesis via de novo pathway; UMP from orotate: step 1/2. Catalyzes the transfer of a ribosyl phosphate group from 5-phosphoribose 1-diphosphate to orotate, leading to the formation of orotidine monophosphate (OMP). The polypeptide is Orotate phosphoribosyltransferase (Helicobacter pylori (strain ATCC 700392 / 26695) (Campylobacter pylori)).